We begin with the raw amino-acid sequence, 81 residues long: Cortexin-2 (81 aa).

Residues 29–49 (TGFAFVGILCIFLGLLIIRCF) traverse the membrane as a helical segment.

The protein belongs to the cortexin family.

The protein localises to the membrane. The chain is Cortexin-2 (Ctxn2) from Mus musculus (Mouse).